Here is a 762-residue protein sequence, read N- to C-terminus: MGSLRPPQGLGLQWSSFFLGKKGPGLTVSLPLLASSLQVNFRSPRSGQRCWAARTSVEKRLVVLVTLLAAGLVACLAALGIQYRTRTPPVCLTEACVSVTSSILNSMDPTVDPCQDFFSYACGGWIKANPVPDGHSRWGTFSNLWEHNQAIIKHLLENSTASASEAEKKAQVYYRACMNETRIEELRAKPLMELIEKLGGWNITGPWAKDNFQDTLQVVTAHYRTSPFFSVYVSADSKNSNSNVIQVDQSGLGLPSRDYYLNKTENEKVLTGYLNYMVQLGKLLGGGDEDSIRPQMQQILDFETALANITIPQEKRRDEELIYHKVTAAELQTLAPAINWLPFLNAIFYPVEINESEPIVVYDKEYLRQVSTLINSTDKCLLNNYMMWNLVRKTSSFLDQRFQDADEKFMEVMYGTKKTCLPRWKFCVSDTENNLGFALGPMFVKATFAEDSKNIASEIILEIKKAFEESLSTLKWMDEDTRRSAKEKADAIYNMIGYPNFIMDPKELDKVFNDYTAVPDLYFENAMRFFNFSLRVTADQLRKAPNRDQWSMTPPMVNAYYSPTKNEIVFPAGILQAPFYTRSSPNALNFGGIGVVVGHELTHAFDDQGREYDKDGNLRPWWKNSSVEAFKQQTECMVQQYNNYSVNGEPVNGRHTLGENIADNGGLKAAYRAYQNWVKKNGAEQILPTLGLTSNQLFFLGFAQVWCSVRTPESSHEGLITDPHSPSRFRVIGSLSNSKEFSEHFRCPLGSPMNPRHKCEVW.

The Cytoplasmic portion of the chain corresponds to 1–60; sequence MGSLRPPQGLGLQWSSFFLGKKGPGLTVSLPLLASSLQVNFRSPRSGQRCWAARTSVEKR. A helical; Signal-anchor for type II membrane protein membrane pass occupies residues 61 to 81; that stretch reads LVVLVTLLAAGLVACLAALGI. At 82-762 the chain is on the extracellular side; the sequence is QYRTRTPPVC…MNPRHKCEVW (681 aa). One can recognise a Peptidase M13 domain in the interval 90–762; the sequence is VCLTEACVSV…MNPRHKCEVW (673 aa). 5 disulfides stabilise this stretch: C91-C96, C114-C747, C122-C707, C177-C427, and C636-C759. Residues N158, N179, N202, N262, N308, N354, N375, and N531 are each glycosylated (N-linked (GlcNAc...) asparagine). Residue H599 coordinates Zn(2+). Residue E600 is part of the active site. H603 contacts Zn(2+). 2 N-linked (GlcNAc...) asparagine glycosylation sites follow: N624 and N643. E659 is a Zn(2+) binding site. D663 functions as the Proton donor in the catalytic mechanism.

Belongs to the peptidase M13 family. As to quaternary structure, homodimer; disulfide-linked. Interacts with PPP1R16B. Interacts with TSPAN8; this interaction recruits the endothelin converting enzyme ECE1 to tetraspanin-enriched microdomains and positively modulates its enzymatic activity. It depends on Zn(2+) as a cofactor. In terms of tissue distribution, all isoforms are expressed in aortic endothelial cells. Isoform A is also expressed in liver; isoform B in smooth muscle cells and fibroblasts; isoform C in aortic endothelial cells, smooth muscle cells, fibroblasts, liver and lung, and isoform D in smooth muscle cells.

The protein localises to the cell membrane. It catalyses the reaction Hydrolysis of the 21-Trp-|-Val-22 bond in big endothelin to form endothelin 1.. Its activity is regulated as follows. Inhibited by phosphoramidon. Its function is as follows. Converts big endothelin-1 to endothelin-1. In Rattus norvegicus (Rat), this protein is Endothelin-converting enzyme 1 (Ece1).